Consider the following 136-residue polypeptide: Psoriasis susceptibility 1 candidate gene 2 protein (136 aa).

The signal sequence occupies residues 1-22 (MILNWKLLGILVLCLHTRGISG). Residues 20 to 136 (ISGSEGHPSH…DLDPPREEYR (117 aa)) are disordered. Composition is skewed to pro residues over residues 44-69 (PQGP…PTRP) and 84-116 (PEPP…PPAP). Residues 118–136 (VDNRPQEEPDLDPPREEYR) show a composition bias toward basic and acidic residues.

In terms of tissue distribution, expressed in skin. Also expressed in heart and skeletal muscle.

It localises to the secreted. The sequence is that of Psoriasis susceptibility 1 candidate gene 2 protein (PSORS1C2) from Homo sapiens (Human).